Reading from the N-terminus, the 262-residue chain is Type III pantothenate kinase (262 aa).

An ATP-binding site is contributed by 7-14 (DIGNTRLK). Residues Tyr-96 and 103–106 (GSDR) each bind substrate. Asp-105 acts as the Proton acceptor in catalysis. Thr-137 lines the ATP pocket. Thr-187 provides a ligand contact to substrate.

This sequence belongs to the type III pantothenate kinase family. Homodimer. Requires NH4(+) as cofactor. K(+) serves as cofactor.

Its subcellular location is the cytoplasm. It catalyses the reaction (R)-pantothenate + ATP = (R)-4'-phosphopantothenate + ADP + H(+). The protein operates within cofactor biosynthesis; coenzyme A biosynthesis; CoA from (R)-pantothenate: step 1/5. Catalyzes the phosphorylation of pantothenate (Pan), the first step in CoA biosynthesis. The polypeptide is Type III pantothenate kinase (Leptothrix cholodnii (strain ATCC 51168 / LMG 8142 / SP-6) (Leptothrix discophora (strain SP-6))).